A 260-amino-acid chain; its full sequence is Ribonuclease HII (260 aa).

The RNase H type-2 domain occupies 71–259 (RRIAGIDEAG…VREVLKASEQ (189 aa)). A divalent metal cation is bound by residues aspartate 77, glutamate 78, and aspartate 169.

This sequence belongs to the RNase HII family. Mn(2+) serves as cofactor. The cofactor is Mg(2+).

The protein resides in the cytoplasm. It carries out the reaction Endonucleolytic cleavage to 5'-phosphomonoester.. Endonuclease that specifically degrades the RNA of RNA-DNA hybrids. The protein is Ribonuclease HII of Geobacillus kaustophilus (strain HTA426).